Reading from the N-terminus, the 231-residue chain is MVHILVRKVEATNMFFSSWTLVFLAVGIIIEEWAELKLGPQKPTITHSPWICCTPLWPSDGLEVIRNILIVVLSLSFMHNLLLGFEFTYMIPQTKYTLIMTACLAFLTGILLLGALLLYHHMLRQGESVYYSSYKISWIIFTAYLNVLFLFISGFLSLLQYKQPIDGSGSLIPRSARKSQVMEQHGVSIKVVSLPAGTAMPRSIVRLHSAHMKEDSPERLNIQARRVTWAL.

Topologically, residues 1-13 (MVHILVRKVEATN) are cytoplasmic. Residues 14–34 (MFFSSWTLVFLAVGIIIEEWA) form a helical membrane-spanning segment. Residues 35 to 67 (ELKLGPQKPTITHSPWICCTPLWPSDGLEVIRN) are Extracellular-facing. A helical membrane pass occupies residues 68–88 (ILIVVLSLSFMHNLLLGFEFT). Over 89 to 97 (YMIPQTKYT) the chain is Cytoplasmic. A helical transmembrane segment spans residues 98–118 (LIMTACLAFLTGILLLGALLL). Topologically, residues 119–135 (YHHMLRQGESVYYSSYK) are extracellular. The helical transmembrane segment at 136-156 (ISWIIFTAYLNVLFLFISGFL) threads the bilayer. Residues 157-231 (SLLQYKQPID…IQARRVTWAL (75 aa)) lie on the Cytoplasmic side of the membrane. An RVxF motif is present at residues 225-229 (RRVTW).

In terms of assembly, interacts (via RVxF motif) with PPP1CC.

The protein resides in the cytoplasmic vesicle. Its subcellular location is the secretory vesicle. It is found in the acrosome membrane. In terms of biological role, probably inhibits protein phosphatase 1 (PP1) in sperm via binding to catalytic subunit PPP1CC. This Bos taurus (Bovine) protein is Transmembrane protein 225 (TMEM225).